We begin with the raw amino-acid sequence, 440 residues long: Beta-1,3-galactosyl-O-glycosyl-glycoprotein beta-1,6-N-acetylglucosaminyltransferase 3 (440 aa).

The Cytoplasmic segment spans residues 1 to 12 (MKMTGWKKKLCR). A helical; Signal-anchor for type II membrane protein membrane pass occupies residues 13–30 (GHHLWALGCYSLLAVVAL). Topologically, residues 31–440 (RLSLRLKCDV…RHKAIYGTEL (410 aa)) are lumenal. Cystine bridges form between Cys-73-Cys-230, Cys-164-Cys-384, Cys-185-Cys-212, and Cys-393-Cys-425. Asn-108 carries N-linked (GlcNAc...) asparagine glycosylation.

This sequence belongs to the glycosyltransferase 14 family. In terms of processing, N-glycosylated.

Its subcellular location is the golgi apparatus membrane. The catalysed reaction is a 3-O-[beta-D-galactosyl-(1-&gt;3)-N-acetyl-alpha-D-galactosaminyl]-L-seryl-[protein] + UDP-N-acetyl-alpha-D-glucosamine = 3-O-{beta-D-galactosyl-(1-&gt;3)-[N-acetyl-beta-D-glucosaminyl-(1-&gt;6)]-N-acetyl-alpha-D-galactosaminyl}-L-seryl-[protein] + UDP + H(+). It carries out the reaction a 3-O-[beta-D-galactosyl-(1-&gt;3)-N-acetyl-alpha-D-galactosaminyl]-L-threonyl-[protein] + UDP-N-acetyl-alpha-D-glucosamine = a 3-O-{beta-D-galactosyl-(1-&gt;3)-[N-acetyl-beta-D-glucosaminyl-(1-&gt;6)]-N-acetyl-alpha-D-galactosaminyl}-L-threonyl-[protein] + UDP + H(+). It catalyses the reaction a beta-D-Gal-(1-&gt;4)-beta-D-GlcNAc-(1-&gt;3)-beta-D-Gal-(1-&gt;4)-beta-D-GlcNAc derivative + UDP-N-acetyl-alpha-D-glucosamine = a beta-D-Gal-(1-&gt;4)-beta-D-GlcNAc-(1-&gt;3)-[beta-D-GlcNAc-(1-&gt;6)]-beta-D-Gal-(1-&gt;4)-N-acetyl-beta-D-glucosaminyl derivative + UDP + H(+). The enzyme catalyses 3-O-[N-acetyl-beta-D-glucosaminyl-(1-&gt;3)-N-acetyl-alpha-D-galactosaminyl]-L-seryl-[protein] + UDP-N-acetyl-alpha-D-glucosamine = 3-O-[N-acetyl-beta-D-glucosaminyl-(1-&gt;3)-[N-acetyl-beta-D-glucosaminyl-(1-&gt;6)]-N-acetyl-alpha-D-galactosaminyl]-L-seryl-[protein] + UDP + H(+). The catalysed reaction is a 3-O-[N-acetyl-beta-D-glucosaminyl-(1-&gt;3)-N-acetyl-alpha-D-galactosaminyl]-L-threonyl-[protein] + UDP-N-acetyl-alpha-D-glucosamine = 3-O-[N-acetyl-beta-D-glucosaminyl-(1-&gt;3)-[N-acetyl-beta-D-glucosaminyl-(1-&gt;6)]-N-acetyl-alpha-D-galactosaminyl]-L-threonyl-[protein] + UDP + H(+). It functions in the pathway protein modification; protein glycosylation. In terms of biological role, glycosyltransferase that can synthesize all known mucin beta 6 N-acetylglucosaminides. Mediates core 2 and core 4 O-glycan branching, 2 important steps in mucin-type biosynthesis. Also has I-branching enzyme activity by converting linear into branched poly-N-acetyllactosaminoglycans, leading to introduce the blood group I antigen during embryonic development. The polypeptide is Beta-1,3-galactosyl-O-glycosyl-glycoprotein beta-1,6-N-acetylglucosaminyltransferase 3 (GCNT3) (Bos mutus grunniens (Wild yak)).